A 274-amino-acid chain; its full sequence is 3-deoxy-manno-octulosonate cytidylyltransferase (274 aa).

It belongs to the KdsB family.

Its subcellular location is the cytoplasm. It catalyses the reaction 3-deoxy-alpha-D-manno-oct-2-ulosonate + CTP = CMP-3-deoxy-beta-D-manno-octulosonate + diphosphate. Its pathway is nucleotide-sugar biosynthesis; CMP-3-deoxy-D-manno-octulosonate biosynthesis; CMP-3-deoxy-D-manno-octulosonate from 3-deoxy-D-manno-octulosonate and CTP: step 1/1. The protein operates within bacterial outer membrane biogenesis; lipopolysaccharide biosynthesis. Activates KDO (a required 8-carbon sugar) for incorporation into bacterial lipopolysaccharide in Gram-negative bacteria. In Bordetella avium (strain 197N), this protein is 3-deoxy-manno-octulosonate cytidylyltransferase.